A 301-amino-acid polypeptide reads, in one-letter code: GTPase Era (301 aa).

In terms of domain architecture, Era-type G spans 4–173 (KAGFVALIGK…LECISKYLSP (170 aa)). The interval 12 to 19 (GKPNAGKS) is G1. 12–19 (GKPNAGKS) serves as a coordination point for GTP. Positions 38-42 (NATRK) are G2. Residues 64 to 67 (DTPG) are G3. GTP contacts are provided by residues 64–68 (DTPGL) and 122–125 (SKID). The interval 122 to 125 (SKID) is G4. Residues 152-154 (LSA) are G5. Residues 204 to 280 (LSDEIPYESD…FLNLQVIAQK (77 aa)) form the KH type-2 domain.

This sequence belongs to the TRAFAC class TrmE-Era-EngA-EngB-Septin-like GTPase superfamily. Era GTPase family. In terms of assembly, monomer.

The protein resides in the cytoplasm. It localises to the cell inner membrane. Functionally, an essential GTPase that binds both GDP and GTP, with rapid nucleotide exchange. Plays a role in 16S rRNA processing and 30S ribosomal subunit biogenesis and possibly also in cell cycle regulation and energy metabolism. The protein is GTPase Era of Helicobacter pylori (strain G27).